The sequence spans 102 residues: Small ribosomal subunit protein uS10 (102 aa).

It belongs to the universal ribosomal protein uS10 family. Part of the 30S ribosomal subunit.

Involved in the binding of tRNA to the ribosomes. This is Small ribosomal subunit protein uS10 from Shouchella clausii (strain KSM-K16) (Alkalihalobacillus clausii).